The chain runs to 657 residues: uncharacterized protein (657 aa).

The first 26 residues, 1–26, serve as a signal peptide directing secretion; it reads MFGKGLVKKSLLFFSGVSTMAVFLVS. Residue Cys-27 is the site of N-palmitoyl cysteine attachment. A lipid anchor (S-diacylglycerol cysteine) is attached at Cys-27. Disordered stretches follow at residues 291-316, 468-496, and 516-563; these read ISPK…FSST, RLSS…DGII, and KSMT…KETN. Over residues 294-304 the composition is skewed to polar residues; the sequence is KQGSDNNSNLS. Basic and acidic residues predominate over residues 469–495; the sequence is LSSDDTNTKKALKEVSTHKNGSDKDGI. Positions 516 to 525 are enriched in polar residues; sequence KSMTDNNSGT. Positions 526-545 are enriched in basic and acidic residues; sequence EQKKNLSEVDTKKKEKESKG. Over residues 546–559 the composition is skewed to low complexity; the sequence is KTQSNGQDSGQQNG.

To T.pallidum TmpC.

It is found in the cell membrane. This is an uncharacterized protein from Mycoplasma pneumoniae (strain ATCC 29342 / M129 / Subtype 1) (Mycoplasmoides pneumoniae).